A 433-amino-acid chain; its full sequence is MDMTKNHTTDTEEFDDGDIRPVSLGIVDDYNASFELPLKPKFLQSENFSDLTSEWDQSRSNTPGLAEGKTEKAQPCGTTDSSKNRIHVEQLLESANEMNNYLAQNIENINNFQVGLLNGGKGLYSSMGDDSSACINGTNFSSTSNFELSDDELEDTTGCTSSIFDKDLFHQQNGLSIPRRRSPLFKSPTASFEIGDATDVEEQDIDDSIFSECSSITSFDMGGLHISLPHDEEEDQEKTKSESENPLLHGIPVDVEVPHISVDEALANFKETIELLLKLSGNRKCTGFNTRVEKKEYSNFYMKSKPTLSSADFLKRIQDKCEYQPTVYLVATFLIDTLFLTRDGNNILQLKLNLQEKEVHRMIIAAVRLSTKLLEDFVHSHEYFSKVCGISKRLLTKLEVSLLICVCNTKLMVSNRKLAASKLLLNELRSFCV.

Over residues 1-10 (MDMTKNHTTD) the composition is skewed to basic and acidic residues. 2 disordered regions span residues 1-20 (MDMT…GDIR) and 51-81 (LTSE…TTDS). A compositionally biased stretch (polar residues) spans 51–63 (LTSEWDQSRSNTP).

This sequence belongs to the cyclin family. PHO80 subfamily. In terms of assembly, forms a cyclin-CDK complex with PHO85. Interacts with GSY2, independent of the presence of PHO85.

It localises to the cytoplasm. Cyclin partner of the cyclin-dependent kinase (CDK) PHO85. Together with cyclin PCL8, negatively controls glycogen accumulation under favorable growth conditions. The PCL10-PHO85 cyclin-CDK holoenzyme has glycogen synthase kinase activity and phosphorylates and negatively regulates glycogen synthase GSY2. Also has minor GLC8 kinase activity. This is PHO85 cyclin-10 (PCL10) from Saccharomyces cerevisiae (strain ATCC 204508 / S288c) (Baker's yeast).